Here is a 259-residue protein sequence, read N- to C-terminus: Probable WRKY transcription factor 65 (259 aa).

The span at 1–17 shows a compositional bias: basic and acidic residues; that stretch reads MKRGLDMARSYNDHESS. Disordered stretches follow at residues 1–101 and 126–165; these read MKRG…RCSS and TSEHNHPWPLTSSTRNGPKPKPEPKPEPEPEVEPEAEEED. A compositionally biased stretch (polar residues) spans 18–31; that stretch reads QETGPESPNSSTFN. Residues 47–69 are compositionally biased toward basic and acidic residues; it reads RSVEKRVVNVPMKEMEGSRHKGD. Positions 68 to 134 form a DNA-binding region, WRKY; that stretch reads GDTTPPSDSW…YTSEHNHPWP (67 aa). Residues 154–165 show a composition bias toward acidic residues; it reads EPEVEPEAEEED.

It is found in the nucleus. In terms of biological role, transcription factor. Interacts specifically with the W box (5'-(T)TGAC[CT]-3'), a frequently occurring elicitor-responsive cis-acting element. In Arabidopsis thaliana (Mouse-ear cress), this protein is Probable WRKY transcription factor 65 (WRKY65).